The sequence spans 500 residues: MTSFESFERGWKAGQNQIVYARLTADLDTPVSLMLKLAEARTDTFMLESVTGGEIRGRYSVVGMKPDLIWQCHGQDSRINREARFDRQAFQPLEGHPLETLRALIAESRIEMPADLPPIAAGLFGYLGYDMIRLVEHLPGINPDPLGLPDAVLMRPSVVAVLDGVKGEVTVVAPAWVSSGLSARAAYAQAAERVMDALRDLDRAPPAQRDFGEVAQVGEMRSNFTHEGYKAAVEKAKDYIRAGDIFQVVPSQRWAQDFRLPPFALYRSLRKTNPSPFMFFFNFGGFQVVGASPEILVRLRDREVTVRPIAGTRKRGATPEEDRALEADLLSDKKELAEHLMLLDLGRNDVGRVAKIGTVRPTEKFIIERYSHVMHIVSNVVGEIAEGEDALSALLAGLPAGTVSGAPKVRAMEIIDELEPEKRGVYGGGVGYFAANGEMDFCIALRTAVLKDETLYIQSGGGVVYDSDPEAEYQETVNKARALRRAAEDAGLFARRAGNG.

L-tryptophan is bound by residues serine 49 and 276-278; that span reads PFM. 311 to 312 provides a ligand contact to chorismate; it reads GT. Glutamate 338 provides a ligand contact to Mg(2+). Residues tyrosine 426, arginine 446, 460–462, and glycine 462 each bind chorismate; that span reads GGG. Glutamate 475 is a Mg(2+) binding site.

It belongs to the anthranilate synthase component I family. In terms of assembly, heterotetramer consisting of two non-identical subunits: a beta subunit (TrpG) and a large alpha subunit (TrpE). Requires Mg(2+) as cofactor.

The catalysed reaction is chorismate + L-glutamine = anthranilate + pyruvate + L-glutamate + H(+). Its pathway is amino-acid biosynthesis; L-tryptophan biosynthesis; L-tryptophan from chorismate: step 1/5. Its activity is regulated as follows. Feedback inhibited by tryptophan. Part of a heterotetrameric complex that catalyzes the two-step biosynthesis of anthranilate, an intermediate in the biosynthesis of L-tryptophan. In the first step, the glutamine-binding beta subunit (TrpG) of anthranilate synthase (AS) provides the glutamine amidotransferase activity which generates ammonia as a substrate that, along with chorismate, is used in the second step, catalyzed by the large alpha subunit of AS (TrpE) to produce anthranilate. In the absence of TrpG, TrpE can synthesize anthranilate directly from chorismate and high concentrations of ammonia. This chain is Anthranilate synthase component 1 (trpE), found in Cereibacter sphaeroides (strain ATCC 17023 / DSM 158 / JCM 6121 / CCUG 31486 / LMG 2827 / NBRC 12203 / NCIMB 8253 / ATH 2.4.1.) (Rhodobacter sphaeroides).